The sequence spans 107 residues: Serine-rich and transmembrane domain-containing protein 1 (107 aa).

Residues 43-63 (IYVSIFLSLLAFLLLLLIIAL) traverse the membrane as a helical segment.

The protein resides in the membrane. This is Serine-rich and transmembrane domain-containing protein 1 (SERTM1) from Homo sapiens (Human).